The chain runs to 458 residues: MNTSYSQSTLRHNQVLIWLCVLSFFSVLNEMVLNVSLPDIANEFNKLPASANWVNTAFMLTFSIGTALYGKLSDQLGIKNLLLFGIMVNGLGSIIGFVGHSFFPILILARFIQGIGAAAFPALVMVVVARYIPKENRGKAFGLIGSLVAMGEGVGPAIGGMVAHYIHWSYLLLIPTATIITVPFLIKLLKKEERIRGHIDMAGIILMSAGIVFFMLFTTSYRFSFLIISILAFFIFVQHIRKAQDPFVDPELGKNVFFVIGTLCGGLIFGTVAGFVSMVPYMMKDVHHLSTAAIGSGIIFPGTMSVIIFGYIGGLLVDRKGSLYVLTIGSALLSSGFLIAAFFIDAAPWIMTIIVIFVFGGLSFTKTVISTVVSSSLKEKEAGAGMSLLNFTSFLSEGTGIAIVGGLLSIGFLDHRLLPIDVDHSTYLYSNMLILFAGIIVICWLVILNVYKRSRRHG.

12 helical membrane passes run 12–33, 81–100, 111–129, 140–162, 165–185, 201–221, 223–240, 256–276, 297–317, 324–344, 346–365, and 432–451; these read HNQVLIWLCVLSFFSVLNEMVL, LLLFGIMVNGLGSIIGFVGH, FIQGIGAAAFPALVMVVVA, AFGLIGSLVAMGEGVGPAIGGMV, YIHWSYLLLIPTATIITVPFL, MAGIILMSAGIVFFMLFTTSY, FSFLIISILAFFIFVQHI, VFFVIGTLCGGLIFGTVAGFV, GIIFPGTMSVIIFGYIGGLLV, YVLTIGSALLSSGFLIAAFFI, AAPWIMTIIVIFVFGGLSFT, and MLILFAGIIVICWLVILNVY.

This sequence belongs to the major facilitator superfamily. TCR/Tet family.

The protein resides in the cell membrane. Its function is as follows. Resistance to tetracycline by an active tetracycline efflux. This is an energy-dependent process that decreases the accumulation of the antibiotic in whole cells. This protein functions as a metal-tetracycline/H(+) antiporter. In Bacillus subtilis (strain 168), this protein is Tetracycline resistance protein (tetB).